The following is a 335-amino-acid chain: Dihydroorotate dehydrogenase (quinone) (335 aa).

Residues 61-65 (AGLDK) and Thr-85 each bind FMN. Substrate is bound at residue Lys-65. Substrate is bound at residue 110-114 (NRMGF). FMN is bound by residues Asn-138 and Asn-171. Asn-171 contacts substrate. The active-site Nucleophile is Ser-174. Asn-176 lines the substrate pocket. Residues Lys-216 and Thr-244 each contribute to the FMN site. Residue 245 to 246 (NT) participates in substrate binding. Residues Gly-267, Gly-296, and 317–318 (YS) contribute to the FMN site.

It belongs to the dihydroorotate dehydrogenase family. Type 2 subfamily. In terms of assembly, monomer. FMN is required as a cofactor.

It is found in the cell membrane. The enzyme catalyses (S)-dihydroorotate + a quinone = orotate + a quinol. The protein operates within pyrimidine metabolism; UMP biosynthesis via de novo pathway; orotate from (S)-dihydroorotate (quinone route): step 1/1. Catalyzes the conversion of dihydroorotate to orotate with quinone as electron acceptor. The sequence is that of Dihydroorotate dehydrogenase (quinone) from Pseudoalteromonas atlantica (strain T6c / ATCC BAA-1087).